The chain runs to 1119 residues: Translation initiation factor IF-2 (1119 aa).

Disordered regions lie at residues 64 to 463 (SIKK…TSGY) and 477 to 507 (RPKK…RQRQ). The segment covering 70-102 (IKKDNYKQNKEDKSSLISSVEEKPFKDNPEKKP) has biased composition (basic and acidic residues). 2 stretches are compositionally biased toward polar residues: residues 116 to 153 (IISN…QNLN) and 182 to 212 (KNTT…KPDQ). Residues 213–224 (NSSKSKTKNINN) show a composition bias toward low complexity. 4 stretches are compositionally biased toward polar residues: residues 242–257 (NKQN…QTVP), 281–297 (FNRQ…SSNK), 319–328 (FNRQVNTNRS), and 375–387 (QVIN…NSET). The span at 421-435 (GKTDWDDSAKLEALR) shows a compositional bias: basic and acidic residues. The segment covering 493–507 (KQFKKKKKETTRQRQ) has biased composition (basic residues). The 173-residue stretch at 610 to 782 (KRPPVITVMG…ILLVSEVEDL (173 aa)) folds into the tr-type G domain. The tract at residues 619–626 (GHVDHGKT) is G1. 619 to 626 (GHVDHGKT) contacts GTP. Residues 644–648 (GITQH) are G2. A G3 region spans residues 669-672 (DTPG). GTP contacts are provided by residues 669–673 (DTPGH) and 723–726 (NKID). The tract at residues 723-726 (NKID) is G4. The tract at residues 759 to 761 (SAI) is G5.

This sequence belongs to the TRAFAC class translation factor GTPase superfamily. Classic translation factor GTPase family. IF-2 subfamily.

The protein localises to the cytoplasm. One of the essential components for the initiation of protein synthesis. Protects formylmethionyl-tRNA from spontaneous hydrolysis and promotes its binding to the 30S ribosomal subunits. Also involved in the hydrolysis of GTP during the formation of the 70S ribosomal complex. The chain is Translation initiation factor IF-2 from Prochlorococcus marinus (strain MIT 9215).